The primary structure comprises 150 residues: Retinal rod rhodopsin-sensitive cGMP 3',5'-cyclic phosphodiesterase subunit delta (150 aa).

Residues R144–V150 are required for association with membranes.

It belongs to the PDE6D/unc-119 family. Interacts with the prenylated catalytic subunits of PDE6, an oligomer composed of two catalytic chains (PDE6A and PDE6B) and two inhibitory chains (gamma); has no effect on enzyme activity but promotes the release of the prenylated enzyme from cell membrane. Interacts with prenylated GRK1 and GRK7. Interacts with prenylated Ras family members, including RAP2A and RAP2C. Interacts with prenylated RHEB and NRAS. Interacts with prenylated HRAS and KRAS. Interacts with RAB13 (prenylated form); dissociates RAB13 from membranes. Interacts with prenylated INPP5E. Interacts with RAB28 (prenylated form); the interaction promotes RAB28 delivery to the photoreceptor outer segments. Interacts with RPGR. Interacts with ARL2. Interacts with ARL3; the interaction occurs specifically with the GTP-bound form of ARL3. Interaction with ARL2 and ARL3 promotes release of farnesylated cargo proteins. As to expression, widely expressed. Detected in various tissues including spleen, prostate gland, testis, ovary, small intestine, colon, retina, and peripheral blood.

Its subcellular location is the cytoplasm. The protein localises to the cytosol. The protein resides in the cytoplasmic vesicle membrane. It localises to the cytoskeleton. It is found in the cilium basal body. In terms of biological role, promotes the release of prenylated target proteins from cellular membranes. Modulates the activity of prenylated or palmitoylated Ras family members by regulating their subcellular location. Required for normal ciliary targeting of farnesylated target proteins, such as INPP5E. Required for RAB28 localization to the cone cell outer segments in the retina. Modulates the subcellular location of target proteins by acting as a GTP specific dissociation inhibitor (GDI). Increases the affinity of ARL3 for GTP by several orders of magnitude. Stabilizes ARL3-GTP by decreasing the nucleotide dissociation rate. In Homo sapiens (Human), this protein is Retinal rod rhodopsin-sensitive cGMP 3',5'-cyclic phosphodiesterase subunit delta (PDE6D).